We begin with the raw amino-acid sequence, 445 residues long: Inositol-pentakisphosphate 2-kinase IPK1 (445 aa).

Residues 19–22 and Arg-40 contribute to the ATP site; that span reads GAAN. Position 127 (Arg-127) interacts with substrate. ATP-binding positions include 144–146 and 162–164; these read SDH and EIK. The EXKPK motif signature appears at 162-166; that stretch reads EIKAK. Substrate contacts are provided by Lys-166, Lys-196, and Asn-234. Arg-237 serves as a coordination point for ATP. Zn(2+) contacts are provided by His-312, Cys-322, Cys-325, and His-341. Asp-363 contributes to the substrate binding site. Asp-402 contacts ATP. The substrate site is built by Lys-406, Lys-410, and Tyr-414.

This sequence belongs to the IPK1 type 2 family. It depends on Zn(2+) as a cofactor.

The enzyme catalyses 1D-myo-inositol 1,3,4,5,6-pentakisphosphate + ATP = 1D-myo-inositol hexakisphosphate + ADP + H(+). Phosphorylates Ins(1,3,4,5,6)P5 at position 2 to form Ins(1,2,3,4,5,6)P6 (InsP6 or phytate). Phytate is a regulator of intracellular signaling, a highly abundant animal antinutrient, and a phosphate store in plant seeds. Also phosphorylates Ins(1,3,4,6)P4 and Ins(1,4,5,6)P4 to produce Ins(1,2,3,4,6)P5 and Ins(1,2,4,5,6)P5. The sequence is that of Inositol-pentakisphosphate 2-kinase IPK1 from Oryza sativa subsp. indica (Rice).